We begin with the raw amino-acid sequence, 512 residues long: Maturase K (512 aa).

This sequence belongs to the intron maturase 2 family. MatK subfamily.

The protein localises to the plastid. It localises to the chloroplast. In terms of biological role, usually encoded in the trnK tRNA gene intron. Probably assists in splicing its own and other chloroplast group II introns. The sequence is that of Maturase K from Acer platanoides (Norway maple).